Here is a 505-residue protein sequence, read N- to C-terminus: MDSQVEGKISPSQKESSSTSGLVSPSEDGPAHQKIHRDQLSVDQIKKIREERAQKRQVRRNSLISQGKDPDFPTPDLQFIERPFLPINHDNSKGLTPATIQVTQDSLDVKIMTYNTLAQTLIRRDFFPESGPALKWHKRSKVLVHELKKYRPDVVSLQEVDYNELNFWQENFHKLGFDVIFKRHEGKTHGLLVAWNNKKFQLDNDWMLDYDNILAGNVISARTRTKNIALIISLYFKGITDSSSRGIIVANTHLFWHPFGVFERLRQSYLVLQKIQEIKACSKYNGWHSLLMGDFNTEPEEPPYLAITKRPLILKGPIRAMVECSLAYRYSKKRNGEESDQDDEECDEKSRGEGHSDQPQNPKPESFTATKEEKALVNQLVALHNSLHVKGVSLYGIGYGKVHPENANGSHGEPGLSNWANTWCGLLDYIFYIEGDHNQDTRQKEPLNAFEGNNNVKIIGYLRMPCAQEMPKHSQPFEGEYASDHISLMCQIRLFFGGEKVHSLK.

2 disordered regions span residues 1–75 and 334–369; these read MDSQ…FPTP and RNGE…SFTA. Positions 10-23 are enriched in polar residues; that stretch reads SPSQKESSSTSGLV. A compositionally biased stretch (basic and acidic residues) spans 36–54; that stretch reads HRDQLSVDQIKKIREERAQ. Ser62 is subject to Phosphoserine. The span at 338–347 shows a compositional bias: acidic residues; the sequence is ESDQDDEECD.

It belongs to the CCR4/nocturin family.

The sequence is that of Probable RNA exonuclease NGL3 (NGL3) from Saccharomyces cerevisiae (strain ATCC 204508 / S288c) (Baker's yeast).